A 77-amino-acid polypeptide reads, in one-letter code: Conotoxin ArMSGL-0141 (77 aa).

Positions 1 to 18 (MSGLGILVLTLLLLVYMA) are cleaved as a signal peptide. A propeptide spanning residues 19–44 (TSHQDAGEKQATQRDAINVRRRRSLT) is cleaved from the precursor. Disulfide bonds link Cys51–Cys63, Cys55–Cys71, and Cys62–Cys75. Phe76 is modified (phenylalanine amide).

This sequence belongs to the conotoxin O3 superfamily. In terms of tissue distribution, expressed by the venom duct.

Its subcellular location is the secreted. This chain is Conotoxin ArMSGL-0141, found in Conus arenatus (Sand-dusted cone).